We begin with the raw amino-acid sequence, 484 residues long: Fork head protein homolog 1 (484 aa).

Residues 76 to 142 (VTIGRNTDSL…NGAKVNFRRI (67 aa)) form the FHA domain. The segment at residues 302–393 (IKPPQSYASM…RRDFLNKWNA (92 aa)) is a DNA-binding region (fork-head).

In terms of assembly, interacts (via FHA domain) with ECM30, GLN3, URE2, MPH1 AND FDO1. Interacts with the origin recognition complex (ORC) composed of ORC1 to ORC6.

Its subcellular location is the nucleus. It localises to the cytoplasm. It is found in the cytosol. Transcription factor that regulates the expression of the CLB2 cluster of genes during the G2/M phase of the mitotic cell cycle. The CLB2 cluster of genes includes mitotic regulators such as CLB1, CLB2, CDC5 and CDC20 as well as SWI5 and ACE2, transcription factors required for the subsequent temporal wave of cell cycle regulated gene expression in the M/G1 phase interval. Involved in HMRa silencing. FKH1 and FKH2 associate with the coding regions of active genes and influence, in opposing ways, transcriptional elongation and termination, and coordinate early transcription elongation and pre-mRNA processing. Both FKH1 and FKH2 play a role as regulators of lifespan in collaboration with the anaphase-promoting complex (APC), likely through combined regulation of stress response, genomic stability, and cell cycle regulation. FKH1 and FKH2 function also in controlling yeast cell morphology by preventing preudohyphal growth. Acts as a rate-limiting replication origin activator via its interaction with the origin recognition complex (ORC). Plays a transcription-independent role in recombination donor preference during mating-type switching through binding to the recombination enhancer (RE), a 700-bp cis-acting element that controls recombination along the left arm of chromosome III. This chain is Fork head protein homolog 1, found in Saccharomyces cerevisiae (strain ATCC 204508 / S288c) (Baker's yeast).